The chain runs to 299 residues: MAELGLNEHHQNEVINYMRFARSKRGLRLKTVDSCFQDLKESRLVEETFTIDEVSEVLNGLQAVVHSEVESELINTAYTNVLLLRQLFAQAEKWYLKLQTDISELENRELLEQVAEFEKAEITSSNKKPILDVTKPKLAPLNEGGTAELLNKEILRLQEENEKLKSRLKTVEIQATNALDEKSKLEKALQDLQLDQGNQKDFIKAQDLSNLENTVAALKSEFQKTLNDKTENQKSLEENLATAKHDLLRVQEQLHMAEKELEKKFQQTAAYRNMKEILTKKNDQIKDLRKRLAQYEPED.

A coiled-coil region spans residues 96 to 296; that stretch reads LKLQTDISEL…DLRKRLAQYE (201 aa). Residues 145 to 299 form an interaction with BSS9 region; that stretch reads GTAELLNKEI…KRLAQYEPED (155 aa).

Belongs to the LZTFL1 family. As to quaternary structure, self-associates. Interacts with BBS9; the interaction mediates the association of LZTL1 with the BBsome complex and regulates BBSome ciliary trafficking.

It localises to the cytoplasm. Functionally, regulates ciliary localization of the BBSome complex. Together with the BBSome complex, controls SMO ciliary trafficking and contributes to the sonic hedgehog (SHH) pathway regulation. May play a role in neurite outgrowth. May have tumor suppressor function. This is Leucine zipper transcription factor-like protein 1 (LZTFL1) from Pongo abelii (Sumatran orangutan).